A 590-amino-acid polypeptide reads, in one-letter code: uncharacterized protein (590 aa).

Disordered stretches follow at residues 306–329 (IAEPQTHTGGADRQRPQRPDGIPY) and 528–590 (QPAP…LMNL). Residues 543 to 563 (PSLPQPVPEPLAPQEPPPPGT) show a composition bias toward pro residues.

This is an uncharacterized protein from Ictaluridae (bullhead catfishes).